The primary structure comprises 142 residues: Small ribosomal subunit protein uS8c (142 aa).

This sequence belongs to the universal ribosomal protein uS8 family. In terms of assembly, part of the 30S ribosomal subunit.

It is found in the plastid. In terms of biological role, one of the primary rRNA binding proteins, it binds directly to 16S rRNA central domain where it helps coordinate assembly of the platform of the 30S subunit. The polypeptide is Small ribosomal subunit protein uS8c (rps8) (Euglena longa (Euglenophycean alga)).